Consider the following 270-residue polypeptide: Phosphatidylglycerol--prolipoprotein diacylglyceryl transferase (270 aa).

Transmembrane regions (helical) follow at residues 19–39, 56–76, 92–112, and 116–136; these read FPVY…LWLA, LVLI…VIFE, QGGL…ILFA, and GVSF…GQAI. Arg138 provides a ligand contact to a 1,2-diacyl-sn-glycero-3-phospho-(1'-sn-glycerol). A run of 3 helical transmembrane segments spans residues 178–198, 206–226, and 236–256; these read HPTF…LLAL, GELF…VEGL, and LRIA…FIIV.

This sequence belongs to the Lgt family.

The protein localises to the cell membrane. It catalyses the reaction L-cysteinyl-[prolipoprotein] + a 1,2-diacyl-sn-glycero-3-phospho-(1'-sn-glycerol) = an S-1,2-diacyl-sn-glyceryl-L-cysteinyl-[prolipoprotein] + sn-glycerol 1-phosphate + H(+). The protein operates within protein modification; lipoprotein biosynthesis (diacylglyceryl transfer). Catalyzes the transfer of the diacylglyceryl group from phosphatidylglycerol to the sulfhydryl group of the N-terminal cysteine of a prolipoprotein, the first step in the formation of mature lipoproteins. This is Phosphatidylglycerol--prolipoprotein diacylglyceryl transferase from Bacillus cereus (strain ZK / E33L).